The following is a 296-amino-acid chain: GTP-binding protein GEM (296 aa).

2 disordered regions span residues 1-20 and 37-68; these read MTLN…PQQQ and PHQY…SVIS. The span at 57 to 68 shows a compositional bias: low complexity; that stretch reads SWSSDSTDSVIS. Residues 82 to 89 and 191 to 194 contribute to the GTP site; these read GEQGVGKS and NKSD. A calmodulin-binding region spans residues 266–285; the sequence is ARRFWGKIVAKNNKNMAFKL.

This sequence belongs to the small GTPase superfamily. RGK family. As to quaternary structure, interacts with calmodulin in a Ca(2+)-dependent manner. Binds ROCK1. Post-translationally, phosphorylated on tyrosine residues.

The protein localises to the cell membrane. In terms of biological role, could be a regulatory protein, possibly participating in receptor-mediated signal transduction at the plasma membrane. Has guanine nucleotide-binding activity but undetectable intrinsic GTPase activity. The sequence is that of GTP-binding protein GEM (GEM) from Pongo abelii (Sumatran orangutan).